The chain runs to 200 residues: HVA22-like protein k (200 aa).

Positions 176-200 (LGEIANGSPVSETNSDSESDSNHED) are disordered.

Belongs to the DP1 family.

This Arabidopsis thaliana (Mouse-ear cress) protein is HVA22-like protein k (HVA22K).